The sequence spans 653 residues: Testicular spindle-associated protein SHCBP1L (653 aa).

The interval 1–65 is disordered; it reads MASGSKASVP…PVKGKAGRET (65 aa). S8 carries the post-translational modification Phosphoserine. The span at 28–41 shows a compositional bias: polar residues; it reads SAVSGDTAAATTLK. The segment covering 46-56 has biased composition (low complexity); the sequence is PVRSVVASPRP. A Phosphoserine modification is found at S53. The stretch at 299–326 forms a coiled coil; the sequence is IAQRFKKTLEKYKNKRVELIEYQSNIKE. PbH1 repeat units lie at residues 493 to 514, 515 to 537, 538 to 571, and 574 to 596; these read SGHM…CVLT, GAAL…ELYP, GSIA…NMKV, and APKL…SILQ. Position 570 is an N6-acetyllysine (K570). N6-acetyllysine is present on K645.

In terms of assembly, interacts with HSPA2; this interaction may promote the recruitment of HSPA2 to the spindle. As to expression, expressed in spermatocytes and elongating spermatids inside the seminiferous tubules (at protein level). Testis-specific.

It is found in the cytoplasm. It localises to the cytoskeleton. Its subcellular location is the spindle. Functionally, testis-specific spindle-associated factor that plays a role in spermatogenesis. In association with HSPA2, participates in the maintenance of spindle integrity during meiosis in male germ cells. This Homo sapiens (Human) protein is Testicular spindle-associated protein SHCBP1L.